The following is a 136-amino-acid chain: Large ribosomal subunit protein uL16 (136 aa).

The protein belongs to the universal ribosomal protein uL16 family. In terms of assembly, part of the 50S ribosomal subunit.

Functionally, binds 23S rRNA and is also seen to make contacts with the A and possibly P site tRNAs. This Psychromonas ingrahamii (strain DSM 17664 / CCUG 51855 / 37) protein is Large ribosomal subunit protein uL16.